Here is a 362-residue protein sequence, read N- to C-terminus: 3-dehydroquinate synthase (362 aa).

NAD(+)-binding positions include 74 to 79 (DGEGYK), 108 to 112 (GVIGD), 132 to 133 (TT), lysine 145, lysine 154, and 172 to 175 (TLDT). Zn(2+)-binding residues include glutamate 187, histidine 250, and histidine 267.

The protein belongs to the sugar phosphate cyclases superfamily. Dehydroquinate synthase family. It depends on Co(2+) as a cofactor. Requires Zn(2+) as cofactor. The cofactor is NAD(+).

The protein localises to the cytoplasm. The enzyme catalyses 7-phospho-2-dehydro-3-deoxy-D-arabino-heptonate = 3-dehydroquinate + phosphate. The protein operates within metabolic intermediate biosynthesis; chorismate biosynthesis; chorismate from D-erythrose 4-phosphate and phosphoenolpyruvate: step 2/7. In terms of biological role, catalyzes the conversion of 3-deoxy-D-arabino-heptulosonate 7-phosphate (DAHP) to dehydroquinate (DHQ). This Geobacter sp. (strain M21) protein is 3-dehydroquinate synthase.